A 1639-amino-acid polypeptide reads, in one-letter code: MAKDSPSPLGASPKKPGCSSPAAAVLENQRRELEKLRAELEAERAGWRAERRRFAARERQLREEAERERRQLADRLRSKWEAQRSRELRQLQEEMQREREAEIRQLLRWKEAEQRQLQQLLHRERDGVVRQARELQRQLAEELVNRGHCSRPGASEVSAAQCRCRLQEVLAQLRWQTDGEQAARIRYLQAALEVERQLFLKYILAHFRGHPALSGSPDPQAVHSLEEPLPQTSSGSCHAPKPACQLGSLDSLSAEVGVRSRSLGLVSSACSSSPDGLLSTHASSLDCFAPACSRSLDSTRSLPKASKSEERPSSPDTSTPGSRRLSPPPSPLPPPPPPSAHRKLSNPRGGEGSESQPCEVLTPSPPGLGHHELIKLNWLLAKALWVLARRCYTLQAENKQLRRAGCPYQADEKVKRLKVKRAELTGLARRLADRARKLQETNLRAVSAPIPGESCAGLELCQVFARQRARDLSEQASAPLAKDKQIEELRQECHLLQARVASGPCSDLHTGRGGPCTQWLNVRDLDRLQRESQREVLRLQRQLMLQQGNGGAWPEAGGQSATCEEVRRQMLALERELDQRRRECQELGAQAAPARRRGEEAETQLQAALLKNAWLAEENGRLQAKTDWVRKVEAENSEVRGHLGRACQERDASGLIAEQLLQQAARGQDRQQQLQRDPQKALCDLHPSWKEIQALQCRPGHPPEQPWETSQMPESQVKGSRRPKFHARPEDYAVSQPNRDIQEKREASLEESPVALGESASVPQVSETVPASQPLSKKTSSQSNSSSEGSMWATVPSSPTLDRDTASEVDDLEPDSVSLALEMGGSAAPAAPKLKIFMAQYNYNPFEGPNDHPEGELPLTAGDYIYIFGDMDEDGFYEGELEDGRRGLVPSNFVEQIPDSYIPGCLPAKSPDLGPSQLPAGQDEALEEDSLLSGKAQGVVDRGLCQMVRVGSKTEVATEILDTKTEACQLGLLQSMGKQGLSRPLLGTKGVLRMAPMQLHLQNVTATSANITWVYSSHRHPHVVYLDDREHALTPAGVSCYTFQGLCPGTHYRARVEVRLPRDLLQVYWGTMSSTVTFDTLLAGPPYPPLDVLVERHASPGVLVVSWLPVTIDSAGSSNGVQVTGYAVYADGLKVCEVADATAGSTLLEFSQLQVPLTWQKVSVRTMSLCGESLDSVPAQIPEDFFMCHRWPETPPFSYTCGDPSTYRVTFPVCPQKLSLAPPSAKASPHNPGSCGEPQAKFLEAFFEEPPRRQSPVSNLGSEGECPSSGAGSQAQELAEAWEGCRKDLLFQKSPQNHRPPSVSDQPGEKENCSQHMGTSKSPAPGFIHLRTECGPRKEPCQEKAALERVLRQKQDAQGFTPPQLGASQQYASDFHNVLKEEQEALCLDLWGTERREERREPEPHSRQGQALGVKRGCQLHEPSSALCPAPSAKVIKMPRGGPQQLGTGANTPARVFVALSDYNPLVMSANLKAAEEELVFQKRQLLRVWGSQDTHDFYLSECNRQVGNIPGRLVAEMEVGTEQTDRRWRSPAQGNLPSVAHLEDFQGLTIPQGSSLVLQGNSKRLPLWTPKIMIAALDYDPGDGQMGGQGKGRLALRAGDVVMVYGPMDDQGFYYGELGGHRGLVPAHLLDHMSLHGH.

3 disordered regions span residues 1-22 (MAKDSPSPLGASPKKPGCSSPA), 215-240 (GSPDPQAVHSLEEPLPQTSSGSCHAP), and 295-364 (SLDS…LTPS). The stretch at 21-143 (PAAAVLENQR…ELQRQLAEEL (123 aa)) forms a coiled coil. Pro residues predominate over residues 326–339 (SPPPSPLPPPPPPS). Coiled coils occupy residues 409–442 (QADEKVKRLKVKRAELTGLARRLADRARKLQETN) and 480–619 (LAKD…AEEN). Residues 697–811 (CRPGHPPEQP…DRDTASEVDD (115 aa)) are disordered. Composition is skewed to polar residues over residues 707-718 (WETSQMPESQVK) and 761-775 (SVPQVSETVPASQPL). The segment covering 776–790 (SKKTSSQSNSSSEGS) has biased composition (low complexity). The SH3 1 domain maps to 832 to 899 (PKLKIFMAQY…PSNFVEQIPD (68 aa)). Fibronectin type-III domains follow at residues 995 to 1083 (APMQ…TLLA) and 1088 to 1184 (PPLD…IPED). Disordered stretches follow at residues 1251–1273 (PRRQSPVSNLGSEGECPSSGAGS) and 1292–1330 (QKSPQNHRPPSVSDQPGEKENCSQHMGTSKSPAPGFIHL). Positions 1293-1305 (KSPQNHRPPSVSD) are enriched in polar residues. SH3 domains are found at residues 1452–1520 (TPAR…EMEV) and 1569–1636 (WTPK…HMSL).

This sequence belongs to the RIMBP family. In terms of assembly, interacts with LRGUK (via guanylate kinase-like domain). Interacts (via C-terminus) with HOOK1 (via coiled-coil region).

Its subcellular location is the cytoplasm. It is found in the cytoskeleton. In terms of biological role, probable component of the manchette, a microtubule-based structure which plays a key role in sperm head morphogenesis during late stages of sperm development. The chain is RIMS-binding protein 3A (RIMBP3) from Homo sapiens (Human).